The primary structure comprises 400 residues: NAD-dependent protein deacetylase sirtuin-7 (400 aa).

Residues 1-27 form a disordered region; it reads MAAGGLSRSERKAAERVRRLREEQQRE. Over residues 8–27 the composition is skewed to basic and acidic residues; it reads RSERKAAERVRRLREEQQRE. In terms of domain architecture, Deacetylase sirtuin-type spans 82–329; it reads PEELRGKVRE…RLLMAELGLE (248 aa). Residues 107 to 126 and 167 to 170 contribute to the NAD(+) site; these read GAGI…NGVW and QNCD. The Proton acceptor role is filled by His187. Zn(2+) is bound by residues Cys195, Cys198, Cys225, and Cys228. NAD(+) contacts are provided by residues 268-270, 297-299, and Cys315; these read GSS and NLQ. The disordered stretch occupies residues 354–380; that stretch reads SHSRKSLCRSREEAPPGDRGAPLSSAP. Arg388 is modified (asymmetric dimethylarginine; alternate). An Omega-N-methylarginine; alternate modification is found at Arg388.

This sequence belongs to the sirtuin family. Class IV subfamily. In terms of assembly, interacts with UBTF and the RNA polymerase I complex. Interacts with components of the B-WICH complex, such as MYBBP1A, SMARCA5/SNF2H and BAZ1B/WSTF. Interacts with ELK4, leading to stabilization at target promoters for H3K18Ac deacetylation. Interacts with histone H2A and/or histone H2B. Interacts with DNMT1. Interacts with SIRT1. The cofactor is Zn(2+). Post-translationally, phosphorylated during mitosis. In terms of processing, methylation at Arg-388 by PRMT6 inhibits the H3K18Ac histone deacetylase activity, promoting mitochondria biogenesis and maintaining mitochondria respiration. Ubiquitinated via 'Lys-63'-linked ubiquitin chains. Deubiquitinated by USP7, inhibiting the H3K18Ac histone deacetylase activity and regulating gluconeogenesis. Ubiquitinated by E3 ubiquitin-protein ligase complex containing FBXO7; leading to proteasomal degradation.

The protein localises to the nucleus. The protein resides in the nucleolus. It localises to the nucleoplasm. It is found in the chromosome. Its subcellular location is the cytoplasm. The enzyme catalyses N(6)-acetyl-L-lysyl-[protein] + NAD(+) + H2O = 2''-O-acetyl-ADP-D-ribose + nicotinamide + L-lysyl-[protein]. It catalyses the reaction N(6)-glutaryl-L-lysyl-[protein] + NAD(+) + H2O = 2''-O-glutaryl-ADP-D-ribose + nicotinamide + L-lysyl-[protein]. The catalysed reaction is N(6)-succinyl-L-lysyl-[protein] + NAD(+) + H2O = 2''-O-succinyl-ADP-D-ribose + nicotinamide + L-lysyl-[protein]. It carries out the reaction N(6)-propanoyl-L-lysyl-[protein] + NAD(+) + H2O = 3''-O-propanoyl-ADP-D-ribose + nicotinamide + L-lysyl-[protein]. The enzyme catalyses N(6)-decanoyl-L-lysyl-[protein] + NAD(+) + H2O = 2''-O-decanoyl-ADP-D-ribose + nicotinamide + L-lysyl-[protein]. NAD-dependent protein-lysine deacetylase and deacylase activities are activated by nucleic acids. Histone deacetylase activity is activated by DNA and nucleosomes. Protein-lysine deacylase activity is activated by RNA. H3K18Ac histone deacetylase activity is inhibited by methylation at Arg-388. H3K18Ac histone deacetylase activity is inhibited by deubiquitination by USP7. Its function is as follows. NAD-dependent protein-lysine deacylase that can act both as a deacetylase or deacylase (desuccinylase, depropionylase, deglutarylase and dedecanoylase), depending on the context. Specifically mediates deacetylation of histone H3 at 'Lys-18' (H3K18Ac). In contrast to other histone deacetylases, displays strong preference for a specific histone mark, H3K18Ac, directly linked to control of gene expression. H3K18Ac is mainly present around the transcription start site of genes and has been linked to activation of nuclear hormone receptors; SIRT7 thereby acts as a transcription repressor. Moreover, H3K18 hypoacetylation has been reported as a marker of malignancy in various cancers and seems to maintain the transformed phenotype of cancer cells. Also able to mediate deacetylation of histone H3 at 'Lys-36' (H3K36Ac) in the context of nucleosomes. Also mediates deacetylation of non-histone proteins, such as ATM, CDK9, DDX21, DDB1, FBL, FKBP5/FKBP51, GABPB1, RAN, RRP9/U3-55K and POLR1E/PAF53. Enriched in nucleolus where it stimulates transcription activity of the RNA polymerase I complex. Acts by mediating the deacetylation of the RNA polymerase I subunit POLR1E/PAF53, thereby promoting the association of RNA polymerase I with the rDNA promoter region and coding region. In response to metabolic stress, SIRT7 is released from nucleoli leading to hyperacetylation of POLR1E/PAF53 and decreased RNA polymerase I transcription. Required to restore the transcription of ribosomal RNA (rRNA) at the exit from mitosis. Promotes pre-ribosomal RNA (pre-rRNA) cleavage at the 5'-terminal processing site by mediating deacetylation of RRP9/U3-55K, a core subunit of the U3 snoRNP complex. Mediates 'Lys-37' deacetylation of Ran, thereby regulating the nuclear export of NF-kappa-B subunit RELA/p65. Acts as a regulator of DNA damage repair by mediating deacetylation of ATM during the late stages of DNA damage response, promoting ATM dephosphorylation and deactivation. Suppresses the activity of the DCX (DDB1-CUL4-X-box) E3 ubiquitin-protein ligase complexes by mediating deacetylation of DDB1, which prevents the interaction between DDB1 and CUL4 (CUL4A or CUL4B). Activates RNA polymerase II transcription by mediating deacetylation of CDK9, thereby promoting 'Ser-2' phosphorylation of the C-terminal domain (CTD) of RNA polymerase II. Deacetylates FBL, promoting histone-glutamine methyltransferase activity of FBL. Acts as a regulator of mitochondrial function by catalyzing deacetylation of GABPB1. Regulates Akt/AKT1 activity by mediating deacetylation of FKBP5/FKBP51. Required to prevent R-loop-associated DNA damage and transcription-associated genomic instability by mediating deacetylation and subsequent activation of DDX21, thereby overcoming R-loop-mediated stalling of RNA polymerases. In addition to protein deacetylase activity, also acts as a protein-lysine deacylase. Acts as a protein depropionylase by mediating depropionylation of Osterix (SP7), thereby regulating bone formation by osteoblasts. Acts as a histone deglutarylase by mediating deglutarylation of histone H4 on 'Lys-91' (H4K91glu); a mark that destabilizes nucleosomes by promoting dissociation of the H2A-H2B dimers from nucleosomes. Acts as a histone desuccinylase: in response to DNA damage, recruited to DNA double-strand breaks (DSBs) and catalyzes desuccinylation of histone H3 on 'Lys-122' (H3K122succ), thereby promoting chromatin condensation and DSB repair. Also promotes DSB repair by promoting H3K18Ac deacetylation, regulating non-homologous end joining (NHEJ). Along with its role in DNA repair, required for chromosome synapsis during prophase I of female meiosis by catalyzing H3K18Ac deacetylation. Involved in transcriptional repression of LINE-1 retrotransposon via H3K18Ac deacetylation, and promotes their association with the nuclear lamina. Required to stabilize ribosomal DNA (rDNA) heterochromatin and prevent cellular senescence induced by rDNA instability. Acts as a negative regulator of SIRT1 by preventing autodeacetylation of SIRT1, restricting SIRT1 deacetylase activity. This is NAD-dependent protein deacetylase sirtuin-7 from Homo sapiens (Human).